The primary structure comprises 399 residues: Elongation factor Tu (399 aa).

The region spanning 10-207 is the tr-type G domain; sequence KPHVNVGTIG…ALDSYIPEPV (198 aa). Residues 19 to 26 form a G1 region; that stretch reads GHIDHGKT. 19 to 26 lines the GTP pocket; it reads GHIDHGKT. Position 26 (Thr26) interacts with Mg(2+). A G2 region spans residues 60-64; that stretch reads GITIN. A G3 region spans residues 81-84; it reads DCPG. GTP contacts are provided by residues 81 to 85 and 136 to 139; these read DCPGH and NKVD. The segment at 136–139 is G4; sequence NKVD. The G5 stretch occupies residues 174 to 176; it reads SAL.

Belongs to the TRAFAC class translation factor GTPase superfamily. Classic translation factor GTPase family. EF-Tu/EF-1A subfamily. As to quaternary structure, monomer.

The protein localises to the cytoplasm. It catalyses the reaction GTP + H2O = GDP + phosphate + H(+). In terms of biological role, GTP hydrolase that promotes the GTP-dependent binding of aminoacyl-tRNA to the A-site of ribosomes during protein biosynthesis. The chain is Elongation factor Tu from Pseudothermotoga lettingae (strain ATCC BAA-301 / DSM 14385 / NBRC 107922 / TMO) (Thermotoga lettingae).